A 357-amino-acid chain; its full sequence is MRVLVAMSGGVDSSVAAARMVDAGHDVVGVHLALSSAPGTLRTGSRGCCSKEDAGDARRVADVLGIPFYVWDFADRFKEDVIDDFVESYARGETPNPCVRCNERIKFSALSARALALGFDALATGHYARLTDGRLRRAVDHDKDQSYVLAVLTAEQLRHAVFPIGDTPKPAIREEAARRGLAVADKADSHDICFIPSGDTRAFLGARIGVRRGSVVDATGAVLAEHDGVHGFTIGQRKGLGIPGPGPDGRPRYVTGIDAETGTVHVGDVTDLEVTSLLGEAPVFTSGVAPDAPVECAVQVRAHGGVVDAVAELRDGALEVSLRTPLRGVAPGQTLVLYRSDPDGDEVLGSATISAAR.

ATP contacts are provided by residues 6–13 (AMSGGVDS) and leucine 32. The active-site Nucleophile is the cysteine 101. The cysteines at positions 101 and 193 are disulfide-linked. Glycine 125 contacts ATP. Residues 143–145 (KDQ) are interaction with tRNA. Cysteine 193 (cysteine persulfide intermediate) is an active-site residue.

The protein belongs to the MnmA/TRMU family.

The protein resides in the cytoplasm. It carries out the reaction S-sulfanyl-L-cysteinyl-[protein] + uridine(34) in tRNA + AH2 + ATP = 2-thiouridine(34) in tRNA + L-cysteinyl-[protein] + A + AMP + diphosphate + H(+). Its function is as follows. Catalyzes the 2-thiolation of uridine at the wobble position (U34) of tRNA, leading to the formation of s(2)U34. This Mycolicibacterium vanbaalenii (strain DSM 7251 / JCM 13017 / BCRC 16820 / KCTC 9966 / NRRL B-24157 / PYR-1) (Mycobacterium vanbaalenii) protein is tRNA-specific 2-thiouridylase MnmA.